A 127-amino-acid polypeptide reads, in one-letter code: Small ribosomal subunit protein bS6 (127 aa).

The tract at residues 99–127 is disordered; that stretch reads PLPAPRVVPGSEPAAAPQEQPAANSEAAS. Low complexity predominate over residues 109 to 127; it reads SEPAAAPQEQPAANSEAAS.

This sequence belongs to the bacterial ribosomal protein bS6 family.

In terms of biological role, binds together with bS18 to 16S ribosomal RNA. This chain is Small ribosomal subunit protein bS6, found in Parasynechococcus marenigrum (strain WH8102).